The primary structure comprises 325 residues: MHPTAARTGVLLINLGTPEAPTPKAVRRYLREFLSDPRVVEIPRVLWWPILNLVVLRTRSRKSAHAYRTIWTERGSPLLAYTQDLRDRLAADGRFAAVEIAMRYGNPSVRLKLEELRNRVETIVVLPLYPQYSAATTGSAFDAVCDTLKTWRHIPSLHFIGDYHRSPKYLEAVAASIRSFWQEHGRPERLVFSFHGLPKCCIDRGDPYASQCQATAQGIARLLELSDDEWLLTYQSRFGRAEWLRPYCIDTLRELPSQGIRHVDVVCPGFAVDCLETLEEIAIANRNEFLGAGGKNYRYIPALNASPAHADILIGLLEPYLALTA.

Residues His-195 and Glu-276 each contribute to the Fe cation site.

The protein belongs to the ferrochelatase family.

The protein localises to the cytoplasm. The enzyme catalyses heme b + 2 H(+) = protoporphyrin IX + Fe(2+). Its pathway is porphyrin-containing compound metabolism; protoheme biosynthesis; protoheme from protoporphyrin-IX: step 1/1. Functionally, catalyzes the ferrous insertion into protoporphyrin IX. In Methylococcus capsulatus (strain ATCC 33009 / NCIMB 11132 / Bath), this protein is Ferrochelatase.